The sequence spans 362 residues: Chorismate synthase (362 aa).

Residue Arg47 coordinates NADP(+). FMN-binding positions include 124-126, Gly286, 301-305, and Arg327; these read RSS and KPTAT.

The protein belongs to the chorismate synthase family. As to quaternary structure, homotetramer. FMNH2 is required as a cofactor.

It catalyses the reaction 5-O-(1-carboxyvinyl)-3-phosphoshikimate = chorismate + phosphate. The protein operates within metabolic intermediate biosynthesis; chorismate biosynthesis; chorismate from D-erythrose 4-phosphate and phosphoenolpyruvate: step 7/7. In terms of biological role, catalyzes the anti-1,4-elimination of the C-3 phosphate and the C-6 proR hydrogen from 5-enolpyruvylshikimate-3-phosphate (EPSP) to yield chorismate, which is the branch point compound that serves as the starting substrate for the three terminal pathways of aromatic amino acid biosynthesis. This reaction introduces a second double bond into the aromatic ring system. This Nostoc punctiforme (strain ATCC 29133 / PCC 73102) protein is Chorismate synthase.